The primary structure comprises 336 residues: Dihydroorotate dehydrogenase (quinone) (336 aa).

FMN-binding positions include 62-66 (AGLDK) and Thr86. Lys66 serves as a coordination point for substrate. Residue 111–115 (NRMGF) coordinates substrate. 2 residues coordinate FMN: Asn139 and Asn172. Substrate is bound at residue Asn172. Ser175 functions as the Nucleophile in the catalytic mechanism. Asn177 provides a ligand contact to substrate. Positions 217 and 245 each coordinate FMN. 246–247 (NT) serves as a coordination point for substrate. FMN is bound by residues Gly268, Gly297, and 318–319 (YS).

The protein belongs to the dihydroorotate dehydrogenase family. Type 2 subfamily. As to quaternary structure, monomer. FMN serves as cofactor.

It is found in the cell membrane. It carries out the reaction (S)-dihydroorotate + a quinone = orotate + a quinol. Its pathway is pyrimidine metabolism; UMP biosynthesis via de novo pathway; orotate from (S)-dihydroorotate (quinone route): step 1/1. Its function is as follows. Catalyzes the conversion of dihydroorotate to orotate with quinone as electron acceptor. This is Dihydroorotate dehydrogenase (quinone) from Klebsiella pneumoniae (strain 342).